A 946-amino-acid polypeptide reads, in one-letter code: Alanine--tRNA ligase, cytoplasmic (946 aa).

Residues His-591, His-595, Cys-710, and His-714 each contribute to the Zn(2+) site.

The protein belongs to the class-II aminoacyl-tRNA synthetase family. As to quaternary structure, monomer. It depends on Zn(2+) as a cofactor.

It localises to the cytoplasm. The catalysed reaction is tRNA(Ala) + L-alanine + ATP = L-alanyl-tRNA(Ala) + AMP + diphosphate. Catalyzes the attachment of alanine to tRNA(Ala) in a two-step reaction: alanine is first activated by ATP to form Ala-AMP and then transferred to the acceptor end of tRNA(Ala). Also edits incorrectly charged tRNA(Ala) via its editing domain. This chain is Alanine--tRNA ligase, cytoplasmic (alaS), found in Dictyostelium discoideum (Social amoeba).